The chain runs to 245 residues: Glucan endo-1,3-beta-glucosidase (245 aa).

The first 23 residues, 1–23 (MMKTLVVVLSLSLTILSFGGAHA), serve as a signal peptide directing secretion. Cystine bridges form between Cys-32/Cys-244, Cys-80/Cys-90, Cys-95/Cys-102, Cys-150/Cys-233, Cys-155/Cys-216, Cys-163/Cys-179, Cys-183/Cys-192, and Cys-193/Cys-203.

Belongs to the thaumatin family. Abundantly expressed in ripening fruit.

It is found in the secreted. It catalyses the reaction Hydrolysis of (1-&gt;3)-beta-D-glucosidic linkages in (1-&gt;3)-beta-D-glucans.. The protein is Glucan endo-1,3-beta-glucosidase of Prunus avium (Cherry).